The chain runs to 319 residues: Acetyl esterase (319 aa).

Positions 91-93 (HGG) match the Involved in the stabilization of the negatively charged intermediate by the formation of the oxyanion hole motif. Residues Ser-165, Asp-262, and His-292 contribute to the active site.

It belongs to the 'GDXG' lipolytic enzyme family. In terms of assembly, homodimer. Interacts with MalT and MelA.

It is found in the cytoplasm. In terms of biological role, displays esterase activity towards short chain fatty esters (acyl chain length of up to 8 carbons). Able to hydrolyze triacetylglycerol (triacetin) and tributyrylglycerol (tributyrin), but not trioleylglycerol (triolein) or cholesterol oleate. Negatively regulates MalT activity by antagonizing maltotriose binding. Inhibits MelA galactosidase activity. The sequence is that of Acetyl esterase from Shigella boydii serotype 18 (strain CDC 3083-94 / BS512).